The following is a 365-amino-acid chain: GTPase Obg (365 aa).

The Obg domain occupies 1–159 (MKFIDEARIE…RMLKLELKVL (159 aa)). The region spanning 160-334 (ADVGLLGMPN…LIYAIKDHLQ (175 aa)) is the OBG-type G domain. Residues 166-173 (GMPNAGKS), 191-195 (FTTLH), 213-216 (DIPG), 284-287 (NKLD), and 315-317 (SAL) each bind GTP. Mg(2+) is bound by residues Ser-173 and Thr-193.

Belongs to the TRAFAC class OBG-HflX-like GTPase superfamily. OBG GTPase family. In terms of assembly, monomer. The cofactor is Mg(2+).

Its subcellular location is the cytoplasm. An essential GTPase which binds GTP, GDP and possibly (p)ppGpp with moderate affinity, with high nucleotide exchange rates and a fairly low GTP hydrolysis rate. Plays a role in control of the cell cycle, stress response, ribosome biogenesis and in those bacteria that undergo differentiation, in morphogenesis control. The chain is GTPase Obg from Cupriavidus taiwanensis (strain DSM 17343 / BCRC 17206 / CCUG 44338 / CIP 107171 / LMG 19424 / R1) (Ralstonia taiwanensis (strain LMG 19424)).